Consider the following 258-residue polypeptide: Deoxyribose-phosphate aldolase (258 aa).

The active-site Proton donor/acceptor is the Asp-101. The active-site Schiff-base intermediate with acetaldehyde is the Lys-166. Lys-200 functions as the Proton donor/acceptor in the catalytic mechanism.

This sequence belongs to the DeoC/FbaB aldolase family. DeoC type 2 subfamily.

It is found in the cytoplasm. It carries out the reaction 2-deoxy-D-ribose 5-phosphate = D-glyceraldehyde 3-phosphate + acetaldehyde. Its pathway is carbohydrate degradation; 2-deoxy-D-ribose 1-phosphate degradation; D-glyceraldehyde 3-phosphate and acetaldehyde from 2-deoxy-alpha-D-ribose 1-phosphate: step 2/2. Its function is as follows. Catalyzes a reversible aldol reaction between acetaldehyde and D-glyceraldehyde 3-phosphate to generate 2-deoxy-D-ribose 5-phosphate. This Haemophilus ducreyi (strain 35000HP / ATCC 700724) protein is Deoxyribose-phosphate aldolase.